A 240-amino-acid chain; its full sequence is Proteasome subunit beta type-1 (240 aa).

Met-1 carries the post-translational modification N-acetylmethionine. Residues 1 to 27 constitute a propeptide that is removed on maturation; that stretch reads MLSTAAYRDPDRELVMGPQGSAGPVQM. Residue Ser-57 is glycosylated (O-linked (GlcNAc) serine). A phosphoserine mark is found at Ser-61 and Ser-67. Position 149 is a phosphotyrosine (Tyr-149). A Phosphoserine modification is found at Ser-161. Position 203 is an N6-acetyllysine (Lys-203). An O-linked (GlcNAc) serine glycan is attached at Ser-208.

It belongs to the peptidase T1B family. In terms of assembly, the 26S proteasome consists of a 20S proteasome core and two 19S regulatory subunits. The 20S proteasome core is a barrel-shaped complex made of 28 subunits that are arranged in four stacked rings. The two outer rings are each formed by seven alpha subunits, and the two inner rings are formed by seven beta subunits. The proteolytic activity is exerted by three beta-subunits PSMB5, PSMB6 and PSMB7. Interacts with SERPINB2. Interacts with RFPL4A. Ubiquitous.

It is found in the cytoplasm. The protein resides in the nucleus. Non-catalytic component of the 20S core proteasome complex involved in the proteolytic degradation of most intracellular proteins. This complex plays numerous essential roles within the cell by associating with different regulatory particles. Associated with two 19S regulatory particles, forms the 26S proteasome and thus participates in the ATP-dependent degradation of ubiquitinated proteins. The 26S proteasome plays a key role in the maintenance of protein homeostasis by removing misfolded or damaged proteins that could impair cellular functions, and by removing proteins whose functions are no longer required. Associated with the PA200 or PA28, the 20S proteasome mediates ubiquitin-independent protein degradation. This type of proteolysis is required in several pathways including spermatogenesis (20S-PA200 complex) or generation of a subset of MHC class I-presented antigenic peptides (20S-PA28 complex). The polypeptide is Proteasome subunit beta type-1 (Psmb1) (Rattus norvegicus (Rat)).